Consider the following 737-residue polypeptide: Dipeptidyl peptidase 3 (737 aa).

Ala2 is modified (N-acetylalanine). A Zn(2+)-binding site is contributed by His450. Glu451 is an active-site residue. 2 residues coordinate Zn(2+): His455 and Glu508.

Belongs to the peptidase M49 family. Zn(2+) is required as a cofactor. As to expression, detected in placenta (at protein level). Detected in erythrocytes (at protein level).

It is found in the cytoplasm. Its subcellular location is the cytosol. The enzyme catalyses Release of an N-terminal dipeptide from a peptide comprising four or more residues, with broad specificity. Also acts on dipeptidyl 2-naphthylamides.. Its activity is regulated as follows. Activated by Co(2+). Inhibited by EDTA and o-phenanthroline (in vitro). In terms of biological role, cleaves and degrades bioactive peptides, including angiotensin, Leu-enkephalin and Met-enkephalin. Also cleaves Arg-Arg-beta-naphthylamide (in vitro). In Homo sapiens (Human), this protein is Dipeptidyl peptidase 3 (DPP3).